The primary structure comprises 431 residues: Polyprenol-phosphate-mannose-dependent alpha-(1-2)-phosphatidylinositol pentamannoside mannosyltransferase (431 aa).

Helical transmembrane passes span 43 to 63, 108 to 128, 148 to 168, 175 to 195, 202 to 222, 229 to 249, 290 to 310, 332 to 352, 364 to 384, and 397 to 417; these read AAVL…YLAP, FAAV…ALLW, GGTA…AIWI, FDYG…VYTP, LLVG…VYLV, AAAF…LVVG, GFGP…ILAW, LSPI…IWLI, ILGW…LSFA, and LAWA…WIAA.

The protein belongs to the glycosyltransferase 87 family.

Its subcellular location is the cell membrane. The protein operates within phospholipid metabolism; phosphatidylinositol metabolism. Catalyzes the alpha-1,2 addition of a mannose residue from polyprenol-phosphate-mannose (PPM) to a monoacyl phosphatidylinositol tetramannoside (AcPIM4) to generate a monoacyl phosphatidylinositol pentamannoside (AcPIM5). The protein is Polyprenol-phosphate-mannose-dependent alpha-(1-2)-phosphatidylinositol pentamannoside mannosyltransferase (pimE) of Mycobacterium tuberculosis (strain CDC 1551 / Oshkosh).